The sequence spans 487 residues: Betaine aldehyde dehydrogenase (487 aa).

The K(+) site is built by isoleucine 27 and aspartate 93. An NAD(+)-binding site is contributed by glycine 149–tryptophan 151. The Charge relay system role is filled by lysine 161. NAD(+) contacts are provided by residues lysine 175–glutamate 178 and serine 228–threonine 231. Residue leucine 243 participates in K(+) binding. The active-site Proton acceptor is the glutamate 249. Glycine 251, cysteine 283, and glutamate 384 together coordinate NAD(+). Catalysis depends on cysteine 283, which acts as the Nucleophile. Cysteine 283 bears the Cysteine sulfenic acid (-SOH) mark. K(+) is bound by residues lysine 454 and glycine 457. Glutamate 461 serves as the catalytic Charge relay system.

The protein belongs to the aldehyde dehydrogenase family. In terms of assembly, dimer of dimers. It depends on K(+) as a cofactor.

It carries out the reaction betaine aldehyde + NAD(+) + H2O = glycine betaine + NADH + 2 H(+). Its pathway is amine and polyamine biosynthesis; betaine biosynthesis via choline pathway; betaine from betaine aldehyde: step 1/1. Involved in the biosynthesis of the osmoprotectant glycine betaine. Catalyzes the irreversible oxidation of betaine aldehyde to the corresponding acid. The sequence is that of Betaine aldehyde dehydrogenase from Brucella anthropi (strain ATCC 49188 / DSM 6882 / CCUG 24695 / JCM 21032 / LMG 3331 / NBRC 15819 / NCTC 12168 / Alc 37) (Ochrobactrum anthropi).